Consider the following 629-residue polypeptide: Proteoglycan Cow (629 aa).

An N-terminal signal peptide occupies residues 1-27 (MKHSPLIASACLALVLMSSSLIGSTEA). Disordered stretches follow at residues 118–186 (KRRV…ESKE) and 198–223 (GDKQQQQQQLSQPAAGPSVIQQDDDE). Positions 128–143 (DSQDAEDINNDDEDNS) are enriched in acidic residues. The N-linked (GlcNAc...) asparagine glycan is linked to Asn-142. A compositionally biased stretch (low complexity) spans 144–159 (SDGGSSNSSPTGTNNA). Residues 167–186 (EETDDEDKSLSLGDDDESKE) are compositionally biased toward acidic residues. Positions 222-273 (DEELDNCKPCPVAKPTFLCGADNRTYSSLCRLDYHNCIHSTSIRIACKGFCP) constitute a Kazal-like domain. Cystine bridges form between Cys-228–Cys-258, Cys-231–Cys-251, and Cys-240–Cys-272. The N-linked (GlcNAc...) asparagine glycan is linked to Asn-244. The segment at 298 to 356 (SLDQQQQQQQQQQQQQQQQQAYKDSNNNNIMMNSGNIMGGNNNDFNTIMNDKEDNNRHN) is disordered. A compositionally biased stretch (low complexity) spans 301–340 (QQQQQQQQQQQQQQQQQAYKDSNNNNIMMNSGNIMGGNNN). EF-hand domains lie at 468–503 (ACKTEAKWMFGHLDLNNDGQLSLQEMYDLEHDQNER) and 508–535 (FIDTCDLDTDSSINTREWCRCFEKTDRP). Asp-481, Asn-483, Asp-485, Gln-487, and Glu-492 together coordinate Ca(2+). One can recognise a Thyroglobulin type-1 domain in the interval 533 to 594 (DRPCAAVRRR…NTRTRGKPNC (62 aa)). 3 disulfides stabilise this stretch: Cys-536/Cys-555, Cys-566/Cys-573, and Cys-575/Cys-594. The segment at 602–629 (ASLTSDDEDEGADDEDSAEGSADQMLVF) is disordered. Acidic residues predominate over residues 606–619 (SDDEDEGADDEDSA). Positions 620–629 (EGSADQMLVF) are enriched in low complexity.

As to quaternary structure, interacts (in heparan sulfate-bound form) with wg. In terms of processing, contains heparan sulfate O-linked oligosaccharides. As to expression, in the wing disk, detected throughout the disk where it is localized primarily to the apical surface but is also present at the basal surface (at protein level).

The protein resides in the secreted. Binds to the Wnt signaling protein wg, stabilizes it and promotes its extracellular distribution. This is required for establishment of a wg gradient during development to allow for regulation of target genes at different levels. The sequence is that of Proteoglycan Cow from Drosophila melanogaster (Fruit fly).